The primary structure comprises 395 residues: Axin-like protein 1 (395 aa).

The 129-residue stretch at 4–132 (RSKTFSDRIL…TTTADVSNTW (129 aa)) folds into the RGS domain. The interval 190-230 (QETKNSSETEEEKKKERSADPYGSDGFAPPPQSTQTHTLRN) is disordered. Basic and acidic residues predominate over residues 194 to 208 (NSSETEEEKKKERSA). Residues 301–386 (EIQKLTVELR…RITAICRMCP (86 aa)) enclose the DIX domain.

In terms of assembly, interacts with bar-1, dsh-2, gsk-3, and mig-5.

In terms of biological role, works in parallel with pry-1 in negatively regulating bar-1 signaling in vulval precursor cells and Q neuroblasts. Shown to have a role in excretory cell development. The sequence is that of Axin-like protein 1 (axl-1) from Caenorhabditis briggsae.